The following is a 393-amino-acid chain: S-adenosylmethionine synthase 1 (393 aa).

Glu-9 lines the Mg(2+) pocket. An ATP-binding site is contributed by His-15. Glu-43 contacts K(+). Residues Glu-56 and Gln-99 each contribute to the L-methionine site. ATP contacts are provided by residues 167 to 169, 235 to 238, Asp-246, 252 to 253, Ala-269, Lys-273, and Lys-277; these read DGK, SGRF, and RK. Asp-246 contributes to the L-methionine binding site. Lys-277 contributes to the L-methionine binding site.

Belongs to the AdoMet synthase family. As to quaternary structure, homotetramer. Mn(2+) serves as cofactor. Requires Mg(2+) as cofactor. It depends on Co(2+) as a cofactor. K(+) is required as a cofactor.

It is found in the cytoplasm. It catalyses the reaction L-methionine + ATP + H2O = S-adenosyl-L-methionine + phosphate + diphosphate. The protein operates within amino-acid biosynthesis; S-adenosyl-L-methionine biosynthesis; S-adenosyl-L-methionine from L-methionine: step 1/1. In terms of biological role, catalyzes the formation of S-adenosylmethionine from methionine and ATP. The reaction comprises two steps that are both catalyzed by the same enzyme: formation of S-adenosylmethionine (AdoMet) and triphosphate, and subsequent hydrolysis of the triphosphate. The sequence is that of S-adenosylmethionine synthase 1 (SAMS1) from Brassica juncea (Indian mustard).